The chain runs to 399 residues: Dual-specificity RNA methyltransferase RlmN (399 aa).

Glutamate 116 serves as the catalytic Proton acceptor. The Radical SAM core domain maps to 122 to 352; sequence SEDRLTLCIS…VLLRRSMGRD (231 aa). A disulfide bridge links cysteine 129 with cysteine 357. Cysteine 136, cysteine 140, and cysteine 143 together coordinate [4Fe-4S] cluster. Residues 185-186, serine 217, 238-240, and asparagine 314 contribute to the S-adenosyl-L-methionine site; these read GE and SLN. Residue cysteine 357 is the S-methylcysteine intermediate of the active site.

The protein belongs to the radical SAM superfamily. RlmN family. Requires [4Fe-4S] cluster as cofactor.

The protein resides in the cytoplasm. It catalyses the reaction adenosine(2503) in 23S rRNA + 2 reduced [2Fe-2S]-[ferredoxin] + 2 S-adenosyl-L-methionine = 2-methyladenosine(2503) in 23S rRNA + 5'-deoxyadenosine + L-methionine + 2 oxidized [2Fe-2S]-[ferredoxin] + S-adenosyl-L-homocysteine. The enzyme catalyses adenosine(37) in tRNA + 2 reduced [2Fe-2S]-[ferredoxin] + 2 S-adenosyl-L-methionine = 2-methyladenosine(37) in tRNA + 5'-deoxyadenosine + L-methionine + 2 oxidized [2Fe-2S]-[ferredoxin] + S-adenosyl-L-homocysteine. In terms of biological role, specifically methylates position 2 of adenine 2503 in 23S rRNA and position 2 of adenine 37 in tRNAs. m2A2503 modification seems to play a crucial role in the proofreading step occurring at the peptidyl transferase center and thus would serve to optimize ribosomal fidelity. This chain is Dual-specificity RNA methyltransferase RlmN, found in Bdellovibrio bacteriovorus (strain ATCC 15356 / DSM 50701 / NCIMB 9529 / HD100).